A 281-amino-acid chain; its full sequence is Phosphate import ATP-binding protein PstB (281 aa).

The ABC transporter domain maps to 33–276; it reads FKIENLSLWY…PQLKRTRDYI (244 aa). 67–74 is a binding site for ATP; the sequence is GPSGCGKS.

The protein belongs to the ABC transporter superfamily. Phosphate importer (TC 3.A.1.7) family. The complex is composed of two ATP-binding proteins (PstB), two transmembrane proteins (PstC and PstA) and a solute-binding protein (PstS).

It localises to the cell membrane. It carries out the reaction phosphate(out) + ATP + H2O = ADP + 2 phosphate(in) + H(+). In terms of biological role, part of the ABC transporter complex PstSACB involved in phosphate import. Responsible for energy coupling to the transport system. The polypeptide is Phosphate import ATP-binding protein PstB (Mycoplasma mobile (strain ATCC 43663 / 163K / NCTC 11711) (Mesomycoplasma mobile)).